The chain runs to 338 residues: Anthranilate phosphoribosyltransferase (338 aa).

Residues Gly-81, 84–85, Thr-89, 91–94, 109–117, and Thr-121 contribute to the 5-phospho-alpha-D-ribose 1-diphosphate site; these read GD, NIST, and KHGNRAQSS. Gly-81 provides a ligand contact to anthranilate. Ser-93 is a binding site for Mg(2+). Anthranilate is bound at residue Asn-112. Arg-167 contacts anthranilate. Mg(2+) contacts are provided by Asp-225 and Glu-226.

It belongs to the anthranilate phosphoribosyltransferase family. Homodimer. Mg(2+) serves as cofactor.

It carries out the reaction N-(5-phospho-beta-D-ribosyl)anthranilate + diphosphate = 5-phospho-alpha-D-ribose 1-diphosphate + anthranilate. It participates in amino-acid biosynthesis; L-tryptophan biosynthesis; L-tryptophan from chorismate: step 2/5. Its function is as follows. Catalyzes the transfer of the phosphoribosyl group of 5-phosphorylribose-1-pyrophosphate (PRPP) to anthranilate to yield N-(5'-phosphoribosyl)-anthranilate (PRA). The polypeptide is Anthranilate phosphoribosyltransferase (Rhizobium rhizogenes (strain K84 / ATCC BAA-868) (Agrobacterium radiobacter)).